A 360-amino-acid polypeptide reads, in one-letter code: G-protein coupled receptor 15 (360 aa).

Over 1 to 33 (MDPEETSVYLDYYYATSPNSDIRETHSHVPYTS) the chain is Extracellular. A helical transmembrane segment spans residues 34 to 54 (VFLPVFYTAVFLTGVLGNLVL). Topologically, residues 55–69 (MGALHFKPGSRRLID) are cytoplasmic. The chain crosses the membrane as a helical span at residues 70-90 (IFIINLAASDFIFLVTLPLWV). At 91-120 (DKEASLGLWRTGSFLCKGSSYMISVNMHCS) the chain is on the extracellular side. The helical transmembrane segment at 121 to 141 (VLLLTCMSVDRYLAIVWPVVS) threads the bilayer. Topologically, residues 142-149 (RKFRRTDC) are cytoplasmic. The helical transmembrane segment at 150-170 (AYVVCASIWFISCLLGLPTLL) threads the bilayer. Over 171–192 (SRELTLIDDKPYCAEKKATPIK) the chain is Extracellular. A helical transmembrane segment spans residues 193–213 (LIWSLVALIFTFFVPLLSIVT). The Cytoplasmic segment spans residues 214-239 (CYCCIARKLCAHYQQSGKHNKKLKKS). A helical transmembrane segment spans residues 240–260 (IKIIFIVVAAFLVSWLPFNTF). Over 261–284 (KFLAIVSGLRQEHYLPSAILQLGM) the chain is Extracellular. The chain crosses the membrane as a helical span at residues 285 to 305 (EVSGPLAFANSCVNPFIYYIF). Residues 306–360 (DSYIRRAIVHCLCPCLKNYDFGSSTETSDSHLTKALSTFIHAEDFARRRKRSVSL) are Cytoplasmic-facing. Ser359 bears the Phosphoserine mark.

Belongs to the G-protein coupled receptor 1 family. As to quaternary structure, interacts with adapter YWHAE; this interaction promotes ER-to-Golgi transport of GPR15. Interacts with GNAI1; this interaction initiates the signaling pathway. Post-translationally, phosphorylation is necessary for YWHAE binding and efficient surface expression. O-glycosylated. Sialylated O-glycans in the N-terminal tail inhibits binding of GPR15LG. In terms of processing, sulfation is required for efficient binding of GPR15LG. As to expression, highly expressed in lymphoid tissues, including macrophages and peripheral blood mononuclear cells.

It localises to the cell membrane. Its function is as follows. G protein-coupled receptor that plays an important role in immune homeostasis. Acts via its natural ligand GPR15LG, a chemokine-like polypeptide strongly expressed in gastrointestinal tissues. GPR15-GPR15LG signaling axis regulates intestinal homeostasis and inflammation through the migration of immune cells. Controls thereby the specific homing of T-cells, particularly FOXP3+ regulatory T-cells (Tregs), to the large intestine lamina propria. Also required for skin localization of thymus-derived dendritic epidermal T-cells. Plays an important role in mediating cytoprotective function as well as angiogenesis of thrombomodulin. Mechanistically, preferentially signals through the Gi/o pathway to inhibit adenylate cyclase activity and activate a phosphatidylinositol-calcium second messenger system that regulates the release of Ca(2+) ions from intracellular stores. In terms of biological role, (Microbial infection) Acts as an alternative coreceptor with CD4 for HIV-1 infection. This is G-protein coupled receptor 15 (GPR15) from Homo sapiens (Human).